The sequence spans 175 residues: Zinc metalloproteinase-disintegrin-like catroriarin (175 aa).

The region spanning 1–63 is the Disintegrin domain; it reads NPCCDAATCK…ECPADVFHKN (63 aa). 9 cysteine pairs are disulfide-bonded: Cys3-Cys26, Cys17-Cys23, Cys22-Cys48, Cys35-Cys55, Cys42-Cys74, Cys67-Cys79, Cys101-Cys147, Cys114-Cys124, and Cys131-Cys171. The D/ECD-tripeptide signature appears at 41–43; that stretch reads ECD. Ca(2+) is bound by residues Asp43, Pro44, Glu46, Asp58, and Val59.

Belongs to the venom metalloproteinase (M12B) family. P-III subfamily. P-IIIa sub-subfamily. As to quaternary structure, monomer. Requires Zn(2+) as cofactor. Post-translationally, glycosylated. Expressed by the venom gland.

It is found in the secreted. Functionally, snake venom metalloproteinase that impairs hemostasis in the envenomed animal. This is Zinc metalloproteinase-disintegrin-like catroriarin from Crotalus atrox (Western diamondback rattlesnake).